A 121-amino-acid polypeptide reads, in one-letter code: Large ribosomal subunit protein uL14 (121 aa).

The protein belongs to the universal ribosomal protein uL14 family. Part of the 50S ribosomal subunit. Forms a cluster with proteins L3 and L19. In the 70S ribosome, L14 and L19 interact and together make contacts with the 16S rRNA in bridges B5 and B8.

Its function is as follows. Binds to 23S rRNA. Forms part of two intersubunit bridges in the 70S ribosome. This chain is Large ribosomal subunit protein uL14, found in Prochlorococcus marinus (strain MIT 9301).